The chain runs to 464 residues: GTPase Der (464 aa).

EngA-type G domains lie at Ala3–Glu166 and Leu177–Asn350. GTP-binding positions include Gly9–Ser16, Asp56–Val60, Asn118–Glu121, Gly183–Ser190, Asp230–Ile234, and Asn295–Asp298. A KH-like domain is found at Ser351–Lys435.

This sequence belongs to the TRAFAC class TrmE-Era-EngA-EngB-Septin-like GTPase superfamily. EngA (Der) GTPase family. Associates with the 50S ribosomal subunit.

In terms of biological role, GTPase that plays an essential role in the late steps of ribosome biogenesis. The sequence is that of GTPase Der from Nitrosococcus oceani (strain ATCC 19707 / BCRC 17464 / JCM 30415 / NCIMB 11848 / C-107).